A 420-amino-acid polypeptide reads, in one-letter code: Tyrosine--tRNA ligase (420 aa).

Residue Tyr-36 participates in L-tyrosine binding. The short motif at 41 to 50 is the 'HIGH' region element; it reads PTADSLHIGH. Tyr-170 and Gln-174 together coordinate L-tyrosine. Residues 231 to 235 carry the 'KMSKS' region motif; it reads KFGKT. Lys-234 is a binding site for ATP. The 68-residue stretch at 353–420 folds into the S4 RNA-binding domain; that stretch reads RNIVEVIVET…KKKYFMVNYK (68 aa).

The protein belongs to the class-I aminoacyl-tRNA synthetase family. TyrS type 1 subfamily. Homodimer.

The protein localises to the cytoplasm. The enzyme catalyses tRNA(Tyr) + L-tyrosine + ATP = L-tyrosyl-tRNA(Tyr) + AMP + diphosphate + H(+). Functionally, catalyzes the attachment of tyrosine to tRNA(Tyr) in a two-step reaction: tyrosine is first activated by ATP to form Tyr-AMP and then transferred to the acceptor end of tRNA(Tyr). The sequence is that of Tyrosine--tRNA ligase from Staphylococcus saprophyticus subsp. saprophyticus (strain ATCC 15305 / DSM 20229 / NCIMB 8711 / NCTC 7292 / S-41).